A 150-amino-acid chain; its full sequence is Large ribosomal subunit protein bL9 (150 aa).

The protein belongs to the bacterial ribosomal protein bL9 family.

Its function is as follows. Binds to the 23S rRNA. This Polynucleobacter necessarius subsp. necessarius (strain STIR1) protein is Large ribosomal subunit protein bL9.